The primary structure comprises 431 residues: Glucose-1-phosphate adenylyltransferase (431 aa).

Lys-39 contacts beta-D-fructose 1,6-bisphosphate. 3 residues coordinate AMP: Arg-40, His-46, and Arg-52. Tyr-114 serves as a coordination point for alpha-D-glucose 1-phosphate. Residue Arg-130 coordinates AMP. Alpha-D-glucose 1-phosphate-binding positions include Gly-179, 194 to 195 (EK), and Ser-212. AMP-binding residues include Glu-370 and Arg-386. Residues 419–423 (REMLR) and 429–431 (QER) each bind beta-D-fructose 1,6-bisphosphate.

It belongs to the bacterial/plant glucose-1-phosphate adenylyltransferase family. As to quaternary structure, homotetramer.

The enzyme catalyses alpha-D-glucose 1-phosphate + ATP + H(+) = ADP-alpha-D-glucose + diphosphate. Its pathway is glycan biosynthesis; glycogen biosynthesis. Its activity is regulated as follows. Allosterically activated by fructose-1,6-bisphosphate (F16BP) and inhibited by AMP. In terms of biological role, involved in the biosynthesis of ADP-glucose, a building block required for the elongation reactions to produce glycogen. Catalyzes the reaction between ATP and alpha-D-glucose 1-phosphate (G1P) to produce pyrophosphate and ADP-Glc. This is Glucose-1-phosphate adenylyltransferase from Escherichia fergusonii (strain ATCC 35469 / DSM 13698 / CCUG 18766 / IAM 14443 / JCM 21226 / LMG 7866 / NBRC 102419 / NCTC 12128 / CDC 0568-73).